Here is a 186-residue protein sequence, read N- to C-terminus: UPF0200 protein Mbar_A0975 (186 aa).

8 to 15 (GMPASGKS) is an ATP binding site.

This sequence belongs to the UPF0200 family.

The protein is UPF0200 protein Mbar_A0975 of Methanosarcina barkeri (strain Fusaro / DSM 804).